The following is a 239-amino-acid chain: Ribonuclease HII (239 aa).

In terms of domain architecture, RNase H type-2 spans 30-221 (GPVAGVDEVG…VRRVANGSGG (192 aa)). D36, E37, and D130 together coordinate a divalent metal cation.

The protein belongs to the RNase HII family. Mn(2+) serves as cofactor. It depends on Mg(2+) as a cofactor.

Its subcellular location is the cytoplasm. The enzyme catalyses Endonucleolytic cleavage to 5'-phosphomonoester.. Functionally, endonuclease that specifically degrades the RNA of RNA-DNA hybrids. This is Ribonuclease HII from Mycolicibacterium paratuberculosis (strain ATCC BAA-968 / K-10) (Mycobacterium paratuberculosis).